The primary structure comprises 167 residues: Lipoprotein signal peptidase (167 aa).

Transmembrane regions (helical) follow at residues 12-32, 68-88, and 99-119; these read WLWL…AVVK, WQRW…IHWL, and GIAY…RLVL. Residues D124 and D142 contribute to the active site. The chain crosses the membrane as a helical span at residues 137 to 157; sequence AFNLADSFIFIGAAMIVLDGF.

This sequence belongs to the peptidase A8 family.

It localises to the cell inner membrane. It carries out the reaction Release of signal peptides from bacterial membrane prolipoproteins. Hydrolyzes -Xaa-Yaa-Zaa-|-(S,diacylglyceryl)Cys-, in which Xaa is hydrophobic (preferably Leu), and Yaa (Ala or Ser) and Zaa (Gly or Ala) have small, neutral side chains.. It functions in the pathway protein modification; lipoprotein biosynthesis (signal peptide cleavage). Its function is as follows. This protein specifically catalyzes the removal of signal peptides from prolipoproteins. In Aeromonas hydrophila subsp. hydrophila (strain ATCC 7966 / DSM 30187 / BCRC 13018 / CCUG 14551 / JCM 1027 / KCTC 2358 / NCIMB 9240 / NCTC 8049), this protein is Lipoprotein signal peptidase.